A 135-amino-acid chain; its full sequence is Kappa-casein (135 aa).

An O-linked (GalNAc...) threonine glycan is attached at Thr96. At Ser114 the chain carries Phosphoserine; alternate. Ser114 carries O-linked (GalNAc...) serine; alternate glycosylation. Thr131 carries an O-linked (GalNAc...) threonine glycan. Phosphoserine is present on Ser132.

This sequence belongs to the kappa-casein family. In terms of tissue distribution, mammary gland specific. Secreted in milk.

It localises to the secreted. In terms of biological role, kappa-casein stabilizes micelle formation, preventing casein precipitation in milk. In Equus grevyi (Grevy's zebra), this protein is Kappa-casein (CSN3).